The chain runs to 224 residues: ATP synthase subunit b (224 aa).

The helical transmembrane segment at 2–22 threads the bilayer; sequence TPSLGLIFWQSVIFLISFIIL.

Belongs to the ATPase B chain family. In terms of assembly, F-type ATPases have 2 components, F(1) - the catalytic core - and F(0) - the membrane proton channel. F(1) has five subunits: alpha(3), beta(3), gamma(1), delta(1), epsilon(1). F(0) has three main subunits: a(1), b(2) and c(10-14). The alpha and beta chains form an alternating ring which encloses part of the gamma chain. F(1) is attached to F(0) by a central stalk formed by the gamma and epsilon chains, while a peripheral stalk is formed by the delta and b chains.

The protein localises to the cell membrane. Its function is as follows. F(1)F(0) ATP synthase produces ATP from ADP in the presence of a proton or sodium gradient. F-type ATPases consist of two structural domains, F(1) containing the extramembraneous catalytic core and F(0) containing the membrane proton channel, linked together by a central stalk and a peripheral stalk. During catalysis, ATP synthesis in the catalytic domain of F(1) is coupled via a rotary mechanism of the central stalk subunits to proton translocation. Component of the F(0) channel, it forms part of the peripheral stalk, linking F(1) to F(0). This chain is ATP synthase subunit b, found in Karelsulcia muelleri (strain GWSS) (Sulcia muelleri).